A 569-amino-acid polypeptide reads, in one-letter code: Arginine--tRNA ligase (569 aa).

The 'HIGH' region motif lies at 123-133; that stretch reads PNIAKRMHIGH.

This sequence belongs to the class-I aminoacyl-tRNA synthetase family. As to quaternary structure, monomer.

Its subcellular location is the cytoplasm. It carries out the reaction tRNA(Arg) + L-arginine + ATP = L-arginyl-tRNA(Arg) + AMP + diphosphate. This chain is Arginine--tRNA ligase, found in Fusobacterium nucleatum subsp. nucleatum (strain ATCC 25586 / DSM 15643 / BCRC 10681 / CIP 101130 / JCM 8532 / KCTC 2640 / LMG 13131 / VPI 4355).